Here is a 254-residue protein sequence, read N- to C-terminus: Phosphonates import ATP-binding protein PhnC 2 (254 aa).

Residues 4–248 (LEVNNLGKHY…KIESIYGFQQ (245 aa)) enclose the ABC transporter domain. 37-44 (GPSGAGKS) contributes to the ATP binding site.

It belongs to the ABC transporter superfamily. Phosphonates importer (TC 3.A.1.9.1) family. The complex is composed of two ATP-binding proteins (PhnC), two transmembrane proteins (PhnE) and a solute-binding protein (PhnD).

It localises to the cell membrane. It carries out the reaction phosphonate(out) + ATP + H2O = phosphonate(in) + ADP + phosphate + H(+). Its function is as follows. Part of the ABC transporter complex PhnCDE involved in phosphonates import. Responsible for energy coupling to the transport system. The protein is Phosphonates import ATP-binding protein PhnC 2 of Oceanobacillus iheyensis (strain DSM 14371 / CIP 107618 / JCM 11309 / KCTC 3954 / HTE831).